The following is a 152-amino-acid chain: Transcriptional regulator MraZ (152 aa).

2 consecutive SpoVT-AbrB domains span residues 5-52 (ASAI…PLHE) and 81-124 (AQDC…EESA).

It belongs to the MraZ family. In terms of assembly, forms oligomers.

The protein localises to the cytoplasm. The protein resides in the nucleoid. The chain is Transcriptional regulator MraZ from Shewanella frigidimarina (strain NCIMB 400).